The following is a 129-amino-acid chain: Protein Turandot A1/2 (129 aa).

The first 21 residues, 1-21 (MNSSTALMCFALLLISPLCLG), serve as a signal peptide directing secretion. N-linked (GlcNAc...) asparagine glycosylation is present at N49.

The protein belongs to the Turandot family.

It is found in the secreted. In terms of biological role, a humoral factor that plays a role in stress tolerance; gives increased resistance to the lethal effects of bacterial challenge and stress. Regulated by the JAK/STAT pathway and NF-KB-like Relish pathway in the fat body, upd3 in the hemocytes and Mekk1 in response to septic injury and consequent immune response. This is Protein Turandot A1/2 (TotA1) from Drosophila sechellia (Fruit fly).